A 375-amino-acid chain; its full sequence is MLRFDLLHTEGHARRGRLTLNHGVVETPIFMPVGTYGTVKGVMPASLEAMGAQIILGNTFHLWLRPGLDVLRQFGGLHRFENWQRPILTDSGGFQVWSLGAMRKISEEGVKFASPVNGDKLFLTPETSMQIQTVLNSDIVMQFDECTPYETSGHLTTEQEARASMELSLRWAARCKTEFARLENPNALFGIVQGGMFEPLRQASLDALVAMDFPGYAIGGVSVGEPKDEMLRIMAHTPHRLPAHKPRYLMGVGTPEDLVEGVTQGVDLFDCVMPTRNARNGHLFTRHGDLRLRNARYKTDERPIDESCTCTACNGFSRAYLHHLDRCGEMLGPMLTSIHNLHYFLNLMREVREALDAGRFEAFRAQFRADRARGV.

Residue D90 is the Proton acceptor of the active site. Substrate is bound by residues 90-94 (DSGGF), D144, Q193, and G220. Residues 251–257 (GVGTPED) are RNA binding. D270 serves as the catalytic Nucleophile. The RNA binding; important for wobble base 34 recognition stretch occupies residues 275 to 279 (TRNAR). C308, C310, C313, and H339 together coordinate Zn(2+).

It belongs to the queuine tRNA-ribosyltransferase family. As to quaternary structure, homodimer. Within each dimer, one monomer is responsible for RNA recognition and catalysis, while the other monomer binds to the replacement base PreQ1. The cofactor is Zn(2+).

It catalyses the reaction 7-aminomethyl-7-carbaguanine + guanosine(34) in tRNA = 7-aminomethyl-7-carbaguanosine(34) in tRNA + guanine. Its pathway is tRNA modification; tRNA-queuosine biosynthesis. Functionally, catalyzes the base-exchange of a guanine (G) residue with the queuine precursor 7-aminomethyl-7-deazaguanine (PreQ1) at position 34 (anticodon wobble position) in tRNAs with GU(N) anticodons (tRNA-Asp, -Asn, -His and -Tyr). Catalysis occurs through a double-displacement mechanism. The nucleophile active site attacks the C1' of nucleotide 34 to detach the guanine base from the RNA, forming a covalent enzyme-RNA intermediate. The proton acceptor active site deprotonates the incoming PreQ1, allowing a nucleophilic attack on the C1' of the ribose to form the product. After dissociation, two additional enzymatic reactions on the tRNA convert PreQ1 to queuine (Q), resulting in the hypermodified nucleoside queuosine (7-(((4,5-cis-dihydroxy-2-cyclopenten-1-yl)amino)methyl)-7-deazaguanosine). The sequence is that of Queuine tRNA-ribosyltransferase from Methylibium petroleiphilum (strain ATCC BAA-1232 / LMG 22953 / PM1).